The following is a 460-amino-acid chain: Crocetin glucosyltransferase 2 (460 aa).

Histidine 19 (proton acceptor) is an active-site residue. Histidine 19 provides a ligand contact to an anthocyanidin. Positions 133, 333, 348, 351, 352, 353, 356, 372, and 373 each coordinate UDP-alpha-D-glucose.

Belongs to the UDP-glycosyltransferase family. As to expression, mainly expressed in fully developed stigmas.

It carries out the reaction crocetin + UDP-alpha-D-glucose = beta-D-glucosyl crocetin + UDP. It catalyses the reaction beta-D-glucosyl crocetin + UDP-alpha-D-glucose = bis(beta-D-glucosyl) crocetin + UDP. The enzyme catalyses beta-D-gentiobiosyl crocetin + UDP-alpha-D-glucose = beta-D-gentiobiosyl beta-D-glucosyl crocetin + UDP. Its function is as follows. Crocetin glucosyltransferase involved in the synthesis of crocin, one of the apocarotenoids responsible for the color and bitter taste of saffron. This chain is Crocetin glucosyltransferase 2 (GLT2), found in Crocus sativus (Saffron).